Here is a 67-residue protein sequence, read N- to C-terminus: Large ribosomal subunit protein bL32 (67 aa).

Basic residues predominate over residues 1-20; sequence MAVPKRKMSRSNTRARRAKW. Residues 1–24 form a disordered region; that stretch reads MAVPKRKMSRSNTRARRAKWKATA.

Belongs to the bacterial ribosomal protein bL32 family.

This Renibacterium salmoninarum (strain ATCC 33209 / DSM 20767 / JCM 11484 / NBRC 15589 / NCIMB 2235) protein is Large ribosomal subunit protein bL32.